The sequence spans 145 residues: Hemoglobin fetal subunit beta (145 aa).

Residues 1–145 (MLSAEEKAAV…VANALAHRYH (145 aa)) form the Globin domain. Residues histidine 62 and histidine 91 each contribute to the heme b site.

The protein belongs to the globin family. Heterotetramer of two alpha chains and two beta chains. Red blood cells.

Functionally, involved in oxygen transport from the lung to the various peripheral tissues. The protein is Hemoglobin fetal subunit beta of Bos taurus (Bovine).